Here is a 469-residue protein sequence, read N- to C-terminus: GTPase Der (469 aa).

EngA-type G domains are found at residues 3 to 167 (PTVA…PDEV) and 175 to 348 (PKFA…RAAM). GTP is bound by residues 9–16 (GRPNVGKS), 56–60 (DTGGF), 119–122 (NKAE), 181–188 (GRPNVGKS), 228–232 (DTAGV), and 293–296 (NKWD). The KH-like domain occupies 349-433 (SKLATPKLTR…PLRVQYKSSE (85 aa)). The interval 429-469 (YKSSENPFDNDEKDKPRAKPKPMSKMRGREKEVRYGKNSKK) is disordered.

Belongs to the TRAFAC class TrmE-Era-EngA-EngB-Septin-like GTPase superfamily. EngA (Der) GTPase family. In terms of assembly, associates with the 50S ribosomal subunit.

Its function is as follows. GTPase that plays an essential role in the late steps of ribosome biogenesis. The chain is GTPase Der from Chromobacterium violaceum (strain ATCC 12472 / DSM 30191 / JCM 1249 / CCUG 213 / NBRC 12614 / NCIMB 9131 / NCTC 9757 / MK).